The following is a 186-amino-acid chain: C-type lectin 37Da (186 aa).

Residues 1 to 20 (MLKTLVQLFLVVAGFAPGFG) form the signal peptide. Residues N35 and N47 are each glycosylated (N-linked (GlcNAc...) asparagine). In terms of domain architecture, C-type lectin spans 46-169 (INESYYVFGQ…CHNHASSLFK (124 aa)). A disulfide bond links C140 and C160.

It localises to the secreted. Functionally, galactose-specific lectin that displays calcium-dependent activity. Binds to the surface of hemocytes and enhances hemocyte encapsulation and melanization. This is likely by interacting with carbohydrates on the surface of the hemocytes. Also displays agglutination activity against the Gram-negative bacterium E.coli. This is C-type lectin 37Da from Drosophila melanogaster (Fruit fly).